A 263-amino-acid polypeptide reads, in one-letter code: Endonuclease 8 (263 aa).

Proline 2 functions as the Schiff-base intermediate with DNA in the catalytic mechanism. The active-site Proton donor is the glutamate 3. The active-site Proton donor; for beta-elimination activity is the lysine 53. Residues glutamine 70, arginine 125, and asparagine 169 each contribute to the DNA site. The FPG-type zinc-finger motif lies at lysine 229–histidine 263. Arginine 253 (proton donor; for delta-elimination activity) is an active-site residue.

The protein belongs to the FPG family. Requires Zn(2+) as cofactor.

The enzyme catalyses 2'-deoxyribonucleotide-(2'-deoxyribose 5'-phosphate)-2'-deoxyribonucleotide-DNA = a 3'-end 2'-deoxyribonucleotide-(2,3-dehydro-2,3-deoxyribose 5'-phosphate)-DNA + a 5'-end 5'-phospho-2'-deoxyribonucleoside-DNA + H(+). Its function is as follows. Involved in base excision repair of DNA damaged by oxidation or by mutagenic agents. Acts as a DNA glycosylase that recognizes and removes damaged bases. Has a preference for oxidized pyrimidines, such as thymine glycol, 5,6-dihydrouracil and 5,6-dihydrothymine. Has AP (apurinic/apyrimidinic) lyase activity and introduces nicks in the DNA strand. Cleaves the DNA backbone by beta-delta elimination to generate a single-strand break at the site of the removed base with both 3'- and 5'-phosphates. In Escherichia coli (strain 55989 / EAEC), this protein is Endonuclease 8.